Reading from the N-terminus, the 472-residue chain is Eukaryotic translation initiation factor 2 subunit 3, X-linked (472 aa).

Ala-2 is modified (N-acetylalanine). Ser-16 is modified (phosphoserine). The tr-type G domain occupies 39 to 248 (QATINIGTIG…IVKKIPVPPR (210 aa)). Residues 48–55 (GHVAHGKS) form a G1 region. 51–56 (AHGKST) serves as a coordination point for GTP. Residues 76–80 (NITIK) form a G2 region. The tract at residues 134–137 (DCPG) is G3. GTP-binding positions include 190–193 (NKID) and 225–227 (SAQ). The interval 190 to 193 (NKID) is G4. Residues 225-227 (SAQ) form a G5 region. An interacts with Cdc123 region spans residues 457 to 469 (GQIRRGVTIKPTV).

The protein belongs to the TRAFAC class translation factor GTPase superfamily. Classic translation factor GTPase family. EIF2G subfamily. As to quaternary structure, eukaryotic translation initiation factor 2 eIF2 is a heterotrimeric complex composed of an alpha (EIF2S1), a beta (EIF2S2) and a gamma (EIF2S3) chain. eIF2 is member of the 43S pre-initiation complex (43S PIC). Interacts (via C-terminus) with CDC123; the interaction is direct. In terms of tissue distribution, widely expressed.

It localises to the cytoplasm. The protein resides in the cytosol. It carries out the reaction GTP + H2O = GDP + phosphate + H(+). In terms of biological role, member of the eIF2 complex that functions in the early steps of protein synthesis by forming a ternary complex with GTP and initiator tRNA. This complex binds to a 40S ribosomal subunit, followed by mRNA binding to form the 43S pre-initiation complex (43S PIC). Junction of the 60S ribosomal subunit to form the 80S initiation complex is preceded by hydrolysis of the GTP bound to eIF2 and release of an eIF2-GDP binary complex. In order for eIF2 to recycle and catalyze another round of initiation, the GDP bound to eIF2 must exchange with GTP by way of a reaction catalyzed by eIF-2B. Along with its paralog on chromosome Y, may contribute to spermatogenesis up to the round spermatid stage. In Rattus norvegicus (Rat), this protein is Eukaryotic translation initiation factor 2 subunit 3, X-linked (Eif2s3).